Consider the following 533-residue polypeptide: MLILFETPGGFAIFKVLNEGKLSNVEDLGNEFSTAKLARKMVKLVAFDKFDNTAEALEAVAKLLEGTPSKGLRKFLKANCVGETLAVADSKLGNIIKEKLKIVCVHNNAVMELLRGIRSQLTELISGLGDQDLGPMSLGLSHSLARYKLKFSSDKVDTMIIQAIGLLDDLDKELNTYAMRVREWFGWHFPELAKIVQDNILYAKAVKLMGNRINAAKLDFSEILADEIEAELKEAAVISMGTEVSDLDLLHIRELCDQVLSLAEYRAQLYDYLKSRMNTIAPNLTALVGELVGARLISHGGSLLNLAKQPGSTVQILGAEKALFRALKTKHATPKYGLIFHASVVGQAAPKNKGKISRSLAAKSVLAIRCDALGDSQDNTMGVENRLKLEARLRTLEGKDLGRLSGSAKGKPKIEVYDKDKKKGSGGLITPAKTYNTAADSLLQTPTVDSENGVKEKKDKKKKKKADDEEEAKTEEPSKKKSNKKKTEAEPETAEEPAKKEKKKKRKHEEEETEMPAKKKEKSEKKKKKKTEV.

A Nop domain is found at 280-398 (IAPNLTALVG…LEARLRTLEG (119 aa)). The tract at residues 402 to 533 (GRLSGSAKGK…EKKKKKKTEV (132 aa)) is disordered. A compositionally biased stretch (basic and acidic residues) spans 412–423 (PKIEVYDKDKKK). Polar residues predominate over residues 433-450 (KTYNTAADSLLQTPTVDS). Composition is skewed to basic and acidic residues over residues 474 to 489 (TEEPSKKKSNKKKTEA) and 515 to 524 (MPAKKKEKSE).

It belongs to the NOP5/NOP56 family.

The protein resides in the nucleus. The protein localises to the nucleolus. In terms of biological role, required for 60S ribosomal subunit biogenesis. This is Probable nucleolar protein 5-1 (NOP5-1) from Arabidopsis thaliana (Mouse-ear cress).